Here is a 345-residue protein sequence, read N- to C-terminus: ATP-dependent kinase YFH7 (345 aa).

31-39 (GPPGSGKST) lines the ATP pocket.

This sequence belongs to the YFH7 family.

Its function is as follows. ATP-dependent kinase that could be involved in endoplasmic reticulum membrane assembly. The chain is ATP-dependent kinase YFH7 (YFH7) from Candida glabrata (strain ATCC 2001 / BCRC 20586 / JCM 3761 / NBRC 0622 / NRRL Y-65 / CBS 138) (Yeast).